We begin with the raw amino-acid sequence, 333 residues long: Arginase (333 aa).

Met-1 is subject to N-acetylmethionine. Ser-16 carries the post-translational modification Phosphoserine. Thr-77 is modified (phosphothreonine). Positions 123, 146, 148, and 150 each coordinate Mn(2+). Residues 148-152, 159-161, and Asp-205 each bind substrate; these read HADIN and SGN. Mn(2+)-binding residues include Asp-256 and Asp-258. Residue Thr-270 is modified to Phosphothreonine. Residues Thr-270 and Glu-301 each contribute to the substrate site.

Belongs to the arginase family. As to quaternary structure, homotrimer. The cofactor is Mn(2+).

The enzyme catalyses L-arginine + H2O = urea + L-ornithine. It participates in nitrogen metabolism; urea cycle; L-ornithine and urea from L-arginine: step 1/1. The polypeptide is Arginase (CAR1) (Saccharomyces cerevisiae (strain ATCC 204508 / S288c) (Baker's yeast)).